We begin with the raw amino-acid sequence, 323 residues long: MRPGFSPRGGRGGFGDRGGFGGRGGFGDRGGFRGGSRGGFGGRGRGGDRGGRGGFRGGFSSPGRGGPRGGGRGGFGGGRGGFGAGRKVIVEPHRHEGIFICRGKEDALVTKNLVPGESVYGEKRISVEDGEVKTEYRAWNPFRSKIAAAILGGVDQIHIKPGVKVLYLGAASGTTVSHVSDVVGPEGLVYAVEFSHRSGRDLINVAKKRTNIIPVIEDARHPHKYRILVGMVDVVFADVAQPDQTRIVALNAHNFLKNGGHFVISIKANCIDSTAAPEAVFAAEVKKMQQENMKPQEQLTLEPYERDHAVVVGIYRPPPKQKK.

The tract at residues 1 to 78 (MRPGFSPRGG…GGGRGGFGGG (78 aa)) is disordered. Gly residues-rich tracts occupy residues 7-44 (PRGG…GGRG) and 63-78 (GRGG…FGGG). Arg-8, Arg-17, Arg-23, and Arg-29 each carry asymmetric dimethylarginine. S-adenosyl-L-methionine contacts are provided by residues 174 to 175 (TT), 193 to 194 (EF), 218 to 219 (DA), and 238 to 241 (DVAQ). Residues 276 to 308 (APEAVFAAEVKKMQQENMKPQEQLTLEPYERDH) are helical.

This sequence belongs to the methyltransferase superfamily. Fibrillarin family. In terms of assembly, component of box C/D small nucleolar ribonucleoprotein (snoRNP) particles. Part of the small subunit (SSU) processome, composed of more than 70 proteins and the RNA chaperone small nucleolar RNA (snoRNA) U3. In terms of processing, by homology to other fibrillarins, some or all of the N-terminal domain arginines are modified to asymmetric dimethylarginine (DMA).

Its subcellular location is the nucleus. The protein localises to the nucleolus. It is found in the nucleoplasm. The enzyme catalyses L-glutaminyl-[histone H2A] + S-adenosyl-L-methionine = N(5)-methyl-L-glutaminyl-[histone H2A] + S-adenosyl-L-homocysteine + H(+). It catalyses the reaction a ribonucleotide in rRNA + S-adenosyl-L-methionine = a 2'-O-methylribonucleotide in rRNA + S-adenosyl-L-homocysteine + H(+). It carries out the reaction a ribonucleotide in U6 snRNA + S-adenosyl-L-methionine = a 2'-O-methylribonucleotide in U6 snRNA + S-adenosyl-L-homocysteine + H(+). Its function is as follows. S-adenosyl-L-methionine-dependent methyltransferase that has the ability to methylate both RNAs and proteins. Involved in pre-rRNA processing by catalyzing the site-specific 2'-hydroxyl methylation of ribose moieties in pre-ribosomal RNA. Probably catalyzes 2'-O-methylation of U6 snRNAs in box C/D RNP complexes. U6 snRNA 2'-O-methylation is required for mRNA splicing fidelity. Also acts as a protein methyltransferase by mediating methylation of 'Gln-105' of histone H2A (H2AQ104me), a modification that impairs binding of the FACT complex and is specifically present at 35S ribosomal DNA locus. Part of the small subunit (SSU) processome, first precursor of the small eukaryotic ribosomal subunit. During the assembly of the SSU processome in the nucleolus, many ribosome biogenesis factors, an RNA chaperone and ribosomal proteins associate with the nascent pre-rRNA and work in concert to generate RNA folding, modifications, rearrangements and cleavage as well as targeted degradation of pre-ribosomal RNA by the RNA exosome. In Xenopus laevis (African clawed frog), this protein is rRNA 2'-O-methyltransferase fibrillarin (fbl).